The chain runs to 183 residues: Interleukin-24 (183 aa).

A signal peptide spans 1–28 (MQTSLRQQILPGLSLILLVLNQVPELQG). C36 and C83 are disulfide-bonded. N-linked (GlcNAc...) asparagine glycosylation is present at N76. Residue K99 forms a Glycyl lysine isopeptide (Lys-Gly) (interchain with G-Cter in ubiquitin) linkage.

The protein belongs to the IL-10 family. Glycosylated. In terms of processing, ubiquitination at Lys-99 promotes proteasomal degradation.

It localises to the secreted. Functionally, multifunctional cytokine mainly produced by T-cells that plays a regulatory role in immune response, tissue homeostasis, host defense, and oncogenesis. Possesses antiviral functions and induces the type I interferon response during influenza infection. Signals through two receptor complexes IL20RA/IL20RB or IL20RB/IL22RA1. In turn, stimulates the JAK1-STAT3 and MAPK pathways and promotes the secretion of pro-inflammatory mediators including IL8 and MMP1. Intracellularly, maintains endoplasmic reticulum homeostasis by restricting the eIF2alpha-CHOP pathway-mediated stress signal. In addition, acts as a quality control mechanism for the ubiquitin proteasome system by alerting the cell to proteasome dysfunction through activation of PKR/EIF2AK2. The polypeptide is Interleukin-24 (Il24) (Rattus norvegicus (Rat)).